A 283-amino-acid polypeptide reads, in one-letter code: Elongation factor Ts (283 aa).

The interval 79–82 (TDFV) is involved in Mg(2+) ion dislocation from EF-Tu.

It belongs to the EF-Ts family.

Its subcellular location is the cytoplasm. Its function is as follows. Associates with the EF-Tu.GDP complex and induces the exchange of GDP to GTP. It remains bound to the aminoacyl-tRNA.EF-Tu.GTP complex up to the GTP hydrolysis stage on the ribosome. This chain is Elongation factor Ts, found in Shewanella putrefaciens (strain CN-32 / ATCC BAA-453).